A 363-amino-acid chain; its full sequence is Aminomethyltransferase (363 aa).

It belongs to the GcvT family. The glycine cleavage system is composed of four proteins: P, T, L and H.

It catalyses the reaction N(6)-[(R)-S(8)-aminomethyldihydrolipoyl]-L-lysyl-[protein] + (6S)-5,6,7,8-tetrahydrofolate = N(6)-[(R)-dihydrolipoyl]-L-lysyl-[protein] + (6R)-5,10-methylene-5,6,7,8-tetrahydrofolate + NH4(+). In terms of biological role, the glycine cleavage system catalyzes the degradation of glycine. The chain is Aminomethyltransferase from Teredinibacter turnerae (strain ATCC 39867 / T7901).